The following is a 678-amino-acid chain: MLLHSTNSYSIFTDHEVETRTSRIRSAMFPDWIPPTSAAEATNSTTSIVEMMQMPTQQLKQSVMDLLTYEGSNDMSGLSLPDLVKLMCDHDESVVARAVHRAYMLSREDPNFFNAPGFDHRSFVEALMAASKSSNVNVRRNAIGALSHMSEQRGGPLLIFRSGGLAEIIRMLYDSLESVVHYAVTTLRNLLMHVSDSRAQARALNAVEALTPHLHKTNPKLLAQVADGLYFLLIDDAPSKITFLSLLGPQILVSILREYSDHRKLIYTVVRCIRSLSVCPSNKPALISLGCLPALYVELCTAKDERSQTAILVAMRNLSDSATNEENLTQLIIKLLEIIRVANDGMTACACGTLSNLTCNNTRNKQTVCSHGGIDALVTAIRRLPEVEEVTEPALCALRHCTARHSLAEEAQSELRFCQAFPVILDQLETLRTPVIKAALGVIRNSALLQTNLIELTQEQTANGHTAVSLTMDILRRAITAIEENPDIAVDGVPMWGVIEGAVSALHQLANHPAVAAACCDDIGQVGNPECPPFLDLLHRLLAHPRLGSMDDEVLEREILGLLYQLSKRPDGARAVESTGVSALLMESRGSQYKSVVTYANGVLSNLKRGDSAAIMNMSNSYDYEMSGSAADWQRDGLERELFAEMYPTNDGGHSESINMALNNSQMRPNHNWYDTDL.

5 ARM repeats span residues arginine 153–methionine 192, proline 280–serine 319, aspartate 320–cysteine 359, threonine 362–alanine 403, and glutamate 409–leucine 448.

It belongs to the beta-catenin family. As to quaternary structure, component of a core catenin-cadherin complex consisting of hmr-1, hmp-1 and hmp-2; the complex localizes to adherens junctions. Interacts with hmr-1; the interaction is direct. May interact with hmp-1. Interacts with frk-1. In terms of tissue distribution, epidermal cells.

The protein localises to the cell junction. It is found in the adherens junction. Functionally, required for cell migration during body enclosure and cell shape changes during body elongation. Plays a role in recruitment of the cadherin protein hmr-1 to adherens junctions. This chain is Beta-catenin-like protein hmp-2 (hmp-2), found in Caenorhabditis elegans.